Reading from the N-terminus, the 363-residue chain is Holliday junction branch migration complex subunit RuvB (363 aa).

A disordered region spans residues 1–32; the sequence is MAIQTDSFAAAPAPSSGSTRRLISAAPTSPNE. Residues 7 to 18 show a composition bias toward low complexity; sequence SFAAAPAPSSGS. Residues 13–200 are large ATPase domain (RuvB-L); that stretch reads APSSGSTRRL…FGIVARLEFY (188 aa). ATP contacts are provided by residues Leu39, Arg40, Gly81, Lys84, Thr85, Thr86, 147 to 149, Arg190, Tyr200, and Arg237; that span reads EDY. A Mg(2+)-binding site is contributed by Thr85. The interval 201–271 is small ATPAse domain (RuvB-S); that stretch reads TPEELVRIVT…IAELALTMLD (71 aa). The head domain (RuvB-H) stretch occupies residues 274–363; that stretch reads PRGFDVMDRK…GPVGSDLFEG (90 aa). 2 residues coordinate DNA: Arg329 and Arg334.

It belongs to the RuvB family. As to quaternary structure, homohexamer. Forms an RuvA(8)-RuvB(12)-Holliday junction (HJ) complex. HJ DNA is sandwiched between 2 RuvA tetramers; dsDNA enters through RuvA and exits via RuvB. An RuvB hexamer assembles on each DNA strand where it exits the tetramer. Each RuvB hexamer is contacted by two RuvA subunits (via domain III) on 2 adjacent RuvB subunits; this complex drives branch migration. In the full resolvosome a probable DNA-RuvA(4)-RuvB(12)-RuvC(2) complex forms which resolves the HJ.

The protein resides in the cytoplasm. It carries out the reaction ATP + H2O = ADP + phosphate + H(+). Functionally, the RuvA-RuvB-RuvC complex processes Holliday junction (HJ) DNA during genetic recombination and DNA repair, while the RuvA-RuvB complex plays an important role in the rescue of blocked DNA replication forks via replication fork reversal (RFR). RuvA specifically binds to HJ cruciform DNA, conferring on it an open structure. The RuvB hexamer acts as an ATP-dependent pump, pulling dsDNA into and through the RuvAB complex. RuvB forms 2 homohexamers on either side of HJ DNA bound by 1 or 2 RuvA tetramers; 4 subunits per hexamer contact DNA at a time. Coordinated motions by a converter formed by DNA-disengaged RuvB subunits stimulates ATP hydrolysis and nucleotide exchange. Immobilization of the converter enables RuvB to convert the ATP-contained energy into a lever motion, pulling 2 nucleotides of DNA out of the RuvA tetramer per ATP hydrolyzed, thus driving DNA branch migration. The RuvB motors rotate together with the DNA substrate, which together with the progressing nucleotide cycle form the mechanistic basis for DNA recombination by continuous HJ branch migration. Branch migration allows RuvC to scan DNA until it finds its consensus sequence, where it cleaves and resolves cruciform DNA. The protein is Holliday junction branch migration complex subunit RuvB of Leptothrix cholodnii (strain ATCC 51168 / LMG 8142 / SP-6) (Leptothrix discophora (strain SP-6)).